The primary structure comprises 305 residues: Probable DNA-invertase y4cG (305 aa).

The Resolvase/invertase-type recombinase catalytic domain maps to 15-148; that stretch reads RLIGYARVST…SGMQAAKARG (134 aa). Residue serine 23 is the O-(5'-phospho-DNA)-serine intermediate of the active site.

The protein belongs to the site-specific recombinase resolvase family.

In Sinorhizobium fredii (strain NBRC 101917 / NGR234), this protein is Probable DNA-invertase y4cG.